A 755-amino-acid chain; its full sequence is MKFNQFSYIPVSPETAYQELRSLGFEVSLDASAKANFESFVRKYFLFFEDTDLALKNWIADPETDLLSFFQSDRPLTAEVFGLVALQLLGFVPNVDFTDSVAFLEKMAFPIAFDGSLNNLHQLLATRTQSGNTLIDQLVAQDLIPISNDYVFFNGKSLATFDTNQLHREVVYVETPVDTDKDGLLDLVKVTILRPNVDFPVPAMMTASPYQQGTNEPSSDKLTHKMEGDLLVKPAGKISLSRPEIKAPEADLTPINPVTKAEERFAHTDTYTLNDYMLARGVASIYVSGVGTFNSEGFMTSGDYQQVLAYKAVIDWLNGRARAFTSRSRQHTITADWASGKVTTTGLSYLGTMSNALATTGVDGLEMVIAEAGISSWYDYYRENGLLVSPGGYPGEDLDTLTEFTYSRALLAGEYLRHQKDYEAYLNELSTAIDRKHGDYNQFWHDRNYVQFADRVKATVVFTHGSQDWNVKPINVYQMFRALPKSLEKHLFFHNGAHVYMNAWQSIDFRESMNALICQKLLGLDNGYTLPTVIWQNNQSEQTWEVLDNFGHDNGKHIQLGKSEASIANHYEEEIFAKYGKAYQSFKDDLFMDKANAITLDFELDQDIQINGRVHLELRVKSSTNRGLISAQVLEMGDKKYLAPIPAPKRMSLDNGRLFKEEALRELPFKQAKYRVITKGHLNLQNRKDLLSIENVTPNEWMTIGLDLQPTIYKLNKGDKLRLVLYTTDFEHTIRDNSDYEVTVDLSQSKMTLPY.

Residues Ser-348, Asp-468, and His-498 each act as charge relay system in the active site.

Belongs to the peptidase S15 family. In terms of assembly, homodimer.

Its subcellular location is the cytoplasm. The catalysed reaction is Hydrolyzes Xaa-Pro-|- bonds to release unblocked, N-terminal dipeptides from substrates including Ala-Pro-|-p-nitroanilide and (sequentially) Tyr-Pro-|-Phe-Pro-|-Gly-Pro-|-Ile.. In terms of biological role, removes N-terminal dipeptides sequentially from polypeptides having unsubstituted N-termini provided that the penultimate residue is proline. The sequence is that of Xaa-Pro dipeptidyl-peptidase from Streptococcus thermophilus (strain ATCC BAA-250 / LMG 18311).